The chain runs to 737 residues: MDFASVLGKSEAHQRTIIHLDMDYFYAQVEEIRDPTLRSKALGIQQKNIVVTCNYVARAKGVTKLMLIAEAQRICPDLVLVNGEDLAPYRQMSQRIFDLLLNYTPLVEKLGFDENFMDVTALVELRQAHVAEALLRPPVGHTYPADGTPLSNCDCGCAQRLAIGTRIAQEIREELKLRLGITCCAGIAYNKLLAKLVGSSHEPNQQTVLVSTYAEQFMRELGDLKRVTGIGQKTQCLLLEAGMSSVEQLQQCDMDVMRKKFGFETATRLRDLAFGRDTSLVRPSGKPKTIGMEDACKPISVRTDVEERFRMLLKRLVEQVAEDGRVPIAIKVVLRKFDSQKKSSHRETKQANILPSLFKTSMCPGETGVSKVQLADGAQDKLLKIVMRLFERIVDMSKPFNITLLGLAFSKFQERKVGSSSIANFLIKKADLEVQSITSLTNTSLTSPTAESPTSDECAFRSSPTTFKPSDQFYRRRATTASPVPMLLDNGSESAATNSDFSDFSETEVEPSPKKSRIGRLLVSKRSRLAADVGDSAAEVASPSKLRVCDLRLNSRDSEKDFPMSTTPSTSTSAPAPRFRTVQPPNTLLQRIDGSLRFVTTRTASRLSSNASSTASSPLPSPMDDSIAMSAPSTTTLPFPSPTTTAVVTSSSSTATCDALTNIVCPAGVDAEVFKELPVELQTELIASWRSSLVAAVEQTNGTGAATSAAIASGAPATATTASGQKNTLYRYFLRNK.

The 215-residue stretch at 17–231 folds into the UmuC domain; the sequence is IIHLDMDYFY…GDLKRVTGIG (215 aa). Asp21 contributes to the Mg(2+) binding site. Residues Tyr26 and Arg58 each contribute to the a 2'-deoxyribonucleoside 5'-triphosphate site. Mg(2+) is bound at residue Asp113. Residue Glu114 is part of the active site. DNA-binding regions lie at residues 212–277 and 288–413; these read TYAE…FGRD and KTIG…SKFQ. 4 disordered regions span residues 443–464, 482–515, 557–581, and 607–643; these read TSLT…RSSP, SPVP…SPKK, DSEK…RFRT, and LSSN…PSPT. The segment covering 491 to 502 has biased composition (polar residues); it reads GSESAATNSDFS. Low complexity-rich tracts occupy residues 563–577, 607–618, and 632–643; these read PMST…APAP, LSSNASSTASSP, and PSTTTLPFPSPT. A Ubiquitin-binding (UBM) motif is present at residues 669–686; it reads VDAEVFKELPVELQTELI.

This sequence belongs to the DNA polymerase type-Y family. Mg(2+) serves as cofactor. Requires Mn(2+) as cofactor.

The protein localises to the nucleus. It catalyses the reaction DNA(n) + a 2'-deoxyribonucleoside 5'-triphosphate = DNA(n+1) + diphosphate. In terms of biological role, error-prone DNA polymerase specifically involved in DNA repair. Plays an important role in translesion synthesis, where the normal high-fidelity DNA polymerases cannot proceed and DNA synthesis stalls. Favors Hoogsteen base-pairing in the active site. Inserts the correct base with higher fidelity opposite an adenosine template. Exhibits low fidelity and efficiency opposite a thymidine template, where it will preferentially insert guanosine. Forms a Schiff base with 5'-deoxyribose phosphate at abasic sites, but may not have lyase activity. The chain is DNA polymerase iota from Drosophila melanogaster (Fruit fly).